The chain runs to 121 residues: Large ribosomal subunit protein bL21 (121 aa).

This sequence belongs to the bacterial ribosomal protein bL21 family. As to quaternary structure, part of the 50S ribosomal subunit. Contacts protein L20.

In terms of biological role, this protein binds to 23S rRNA in the presence of protein L20. This chain is Large ribosomal subunit protein bL21, found in Gloeobacter violaceus (strain ATCC 29082 / PCC 7421).